The following is a 443-amino-acid chain: Trigger factor (443 aa).

Residues 169–254 (GDIAFLDFSG…LNSIKEVQLP (86 aa)) enclose the PPIase FKBP-type domain.

Belongs to the FKBP-type PPIase family. Tig subfamily.

It is found in the cytoplasm. The enzyme catalyses [protein]-peptidylproline (omega=180) = [protein]-peptidylproline (omega=0). Its function is as follows. Involved in protein export. Acts as a chaperone by maintaining the newly synthesized protein in an open conformation. Functions as a peptidyl-prolyl cis-trans isomerase. The protein is Trigger factor of Mycoplasmoides gallisepticum (strain R(low / passage 15 / clone 2)) (Mycoplasma gallisepticum).